The following is a 367-amino-acid chain: MSDSQTLVVKLGTSVLTGGSRRLNRAHIVELVRQCAQLHAAGHRIVIVTSGAIAAGREHLGYPELPATIASKQLLAAVGQSRLIQLWEQLFSIYGIHVGQMLLTRADMEDRERFLNARDTLRALLDNNIVPVINENDAVATAEIKVGDNDNLSALAAILAGADKLLLLTDQKGLYTADPRSNPQAELIKDVYGIDDALRAIAGDSVSGLGTGGMSTKLQAADVACRAGIDTIIAAGSKPGVIGDVMEGISVGTLFHAQATPLENRKRWIFGAPPAGEITVDEGATAAILERGSSLLPKGIKSVTGNFSRGEVIRICNLEGRDIAHGVSRYNSDALRRIAGHHSQEIDAILGYEYGSVAVHRDDMITR.

K10 contributes to the ATP binding site. Substrate contacts are provided by S50, D137, and N149. ATP-binding positions include 169–170 (TD) and 211–217 (TGGMSTK). The region spanning 275 to 353 (AGEITVDEGA…QEIDAILGYE (79 aa)) is the PUA domain.

Belongs to the glutamate 5-kinase family.

The protein resides in the cytoplasm. It carries out the reaction L-glutamate + ATP = L-glutamyl 5-phosphate + ADP. It functions in the pathway amino-acid biosynthesis; L-proline biosynthesis; L-glutamate 5-semialdehyde from L-glutamate: step 1/2. Its function is as follows. Catalyzes the transfer of a phosphate group to glutamate to form L-glutamate 5-phosphate. In Escherichia fergusonii (strain ATCC 35469 / DSM 13698 / CCUG 18766 / IAM 14443 / JCM 21226 / LMG 7866 / NBRC 102419 / NCTC 12128 / CDC 0568-73), this protein is Glutamate 5-kinase.